The chain runs to 492 residues: Aspartate aminotransferase (492 aa).

The N-terminal 66 residues, 1 to 66 (MMSASFKCPV…KGSCCLFNIR (66 aa)), are a transit peptide targeting the chloroplast. L-aspartate-binding residues include Gly119, Trp206, and Asn256. Residue Lys319 is modified to N6-(pyridoxal phosphate)lysine. L-aspartate is bound at residue Arg458.

The protein belongs to the class-I pyridoxal-phosphate-dependent aminotransferase family. Homodimer. Requires pyridoxal 5'-phosphate as cofactor.

Its subcellular location is the plastid. It is found in the chloroplast. The enzyme catalyses L-aspartate + 2-oxoglutarate = oxaloacetate + L-glutamate. In terms of biological role, prokaryotic-type aspartate aminotransferase. Specific for aspartate and no activity with glutamine, asparagine, alanine, histidine, leucine, methionine, lysine, arginine, tryptophan, tyrosine, phenylalanine or kynurenine. This Pinus pinaster (Maritime pine) protein is Aspartate aminotransferase (AAT).